The chain runs to 253 residues: 1-(5-phosphoribosyl)-5-[(5-phosphoribosylamino)methylideneamino] imidazole-4-carboxamide isomerase (253 aa).

The active-site Proton acceptor is Asp-11. Asp-132 (proton donor) is an active-site residue.

It belongs to the HisA/HisF family.

It localises to the cytoplasm. The enzyme catalyses 1-(5-phospho-beta-D-ribosyl)-5-[(5-phospho-beta-D-ribosylamino)methylideneamino]imidazole-4-carboxamide = 5-[(5-phospho-1-deoxy-D-ribulos-1-ylimino)methylamino]-1-(5-phospho-beta-D-ribosyl)imidazole-4-carboxamide. It participates in amino-acid biosynthesis; L-histidine biosynthesis; L-histidine from 5-phospho-alpha-D-ribose 1-diphosphate: step 4/9. The polypeptide is 1-(5-phosphoribosyl)-5-[(5-phosphoribosylamino)methylideneamino] imidazole-4-carboxamide isomerase (Methylobacterium nodulans (strain LMG 21967 / CNCM I-2342 / ORS 2060)).